The chain runs to 385 residues: 1-deoxy-D-xylulose 5-phosphate reductoisomerase (385 aa).

The NADPH site is built by T10, G11, S12, I13, K37, and N124. K125 serves as a coordination point for 1-deoxy-D-xylulose 5-phosphate. An NADPH-binding site is contributed by E126. D150 lines the Mn(2+) pocket. The 1-deoxy-D-xylulose 5-phosphate site is built by S151, E152, S176, and H199. E152 contributes to the Mn(2+) binding site. G205 contacts NADPH. 1-deoxy-D-xylulose 5-phosphate is bound by residues S212, N217, K218, and E221. Residue E221 participates in Mn(2+) binding.

It belongs to the DXR family. Mg(2+) serves as cofactor. The cofactor is Mn(2+).

The enzyme catalyses 2-C-methyl-D-erythritol 4-phosphate + NADP(+) = 1-deoxy-D-xylulose 5-phosphate + NADPH + H(+). The protein operates within isoprenoid biosynthesis; isopentenyl diphosphate biosynthesis via DXP pathway; isopentenyl diphosphate from 1-deoxy-D-xylulose 5-phosphate: step 1/6. In terms of biological role, catalyzes the NADPH-dependent rearrangement and reduction of 1-deoxy-D-xylulose-5-phosphate (DXP) to 2-C-methyl-D-erythritol 4-phosphate (MEP). This Clostridium botulinum (strain Loch Maree / Type A3) protein is 1-deoxy-D-xylulose 5-phosphate reductoisomerase.